The following is a 519-amino-acid chain: 2-isopropylmalate synthase (519 aa).

One can recognise a Pyruvate carboxyltransferase domain in the interval 5–267 (VVIFDTTLRD…STNINYKEIY (263 aa)). Mn(2+)-binding residues include Asp14, His202, His204, and Asn238. The segment at 392–519 (SLKFFSVQSI…LKILKDFKKK (128 aa)) is regulatory domain.

The protein belongs to the alpha-IPM synthase/homocitrate synthase family. LeuA type 1 subfamily. Homodimer. The cofactor is Mn(2+).

It is found in the cytoplasm. It catalyses the reaction 3-methyl-2-oxobutanoate + acetyl-CoA + H2O = (2S)-2-isopropylmalate + CoA + H(+). The protein operates within amino-acid biosynthesis; L-leucine biosynthesis; L-leucine from 3-methyl-2-oxobutanoate: step 1/4. Its function is as follows. Catalyzes the condensation of the acetyl group of acetyl-CoA with 3-methyl-2-oxobutanoate (2-ketoisovalerate) to form 3-carboxy-3-hydroxy-4-methylpentanoate (2-isopropylmalate). The polypeptide is 2-isopropylmalate synthase (Buchnera aphidicola subsp. Acyrthosiphon pisum (strain APS) (Acyrthosiphon pisum symbiotic bacterium)).